The sequence spans 135 residues: Nucleoside diphosphate kinase (135 aa).

6 residues coordinate ATP: Lys10, Phe58, Arg86, Thr92, Arg103, and Asn113. Residue His116 is the Pros-phosphohistidine intermediate of the active site.

The protein belongs to the NDK family. As to quaternary structure, homotetramer. The cofactor is Mg(2+).

The protein localises to the cytoplasm. It catalyses the reaction a 2'-deoxyribonucleoside 5'-diphosphate + ATP = a 2'-deoxyribonucleoside 5'-triphosphate + ADP. The catalysed reaction is a ribonucleoside 5'-diphosphate + ATP = a ribonucleoside 5'-triphosphate + ADP. Major role in the synthesis of nucleoside triphosphates other than ATP. The ATP gamma phosphate is transferred to the NDP beta phosphate via a ping-pong mechanism, using a phosphorylated active-site intermediate. The chain is Nucleoside diphosphate kinase from Nocardioides sp. (strain ATCC BAA-499 / JS614).